We begin with the raw amino-acid sequence, 1932 residues long: DOCK-like protein 1 (1932 aa).

Positions 1410 to 1824 constitute a DOCKER domain; sequence LLEANRPELF…EIERYSRTLS (415 aa). The segment covering 1908 to 1921 has biased composition (polar residues); it reads STFLAGSQPNTNTD. The segment at 1908-1932 is disordered; the sequence is STFLAGSQPNTNTDSQHKHDYSHSG. Residues 1922 to 1932 show a composition bias toward basic and acidic residues; sequence SQHKHDYSHSG.

It belongs to the DOCK family. Forms an active heterodimer with LMO1.

It is found in the cytoplasm. It localises to the mitochondrion. Its function is as follows. Forms a transiant heterodimeric complex with LMO1, that acts as a guanine nucleotide exchange factor exchange factor (GEF) for the small GTPase RHO5. DCK1, LMO1 and RHO5 relocate to mitochondria upon oxidative stress and trigger cell death. The DCK1/LMO1/RHO5 signaling module mediates mitochondrial turnover under nitrogen starvation conditions via mitophagy. The DCK1/LMO1/RHO5 signaling module plays also a function in cell wall integrity signaling. The sequence is that of DOCK-like protein 1 from Saccharomyces cerevisiae (strain ATCC 204508 / S288c) (Baker's yeast).